A 286-amino-acid polypeptide reads, in one-letter code: Bifunctional protein FolD (286 aa).

NADP(+) is bound by residues 165-167, serine 190, and isoleucine 231; that span reads GRS.

The protein belongs to the tetrahydrofolate dehydrogenase/cyclohydrolase family. As to quaternary structure, homodimer.

The catalysed reaction is (6R)-5,10-methylene-5,6,7,8-tetrahydrofolate + NADP(+) = (6R)-5,10-methenyltetrahydrofolate + NADPH. It catalyses the reaction (6R)-5,10-methenyltetrahydrofolate + H2O = (6R)-10-formyltetrahydrofolate + H(+). Its pathway is one-carbon metabolism; tetrahydrofolate interconversion. Its function is as follows. Catalyzes the oxidation of 5,10-methylenetetrahydrofolate to 5,10-methenyltetrahydrofolate and then the hydrolysis of 5,10-methenyltetrahydrofolate to 10-formyltetrahydrofolate. The polypeptide is Bifunctional protein FolD (Thermodesulfovibrio yellowstonii (strain ATCC 51303 / DSM 11347 / YP87)).